The primary structure comprises 212 residues: 3-isopropylmalate dehydratase small subunit (212 aa).

It belongs to the LeuD family. LeuD type 1 subfamily. Heterodimer of LeuC and LeuD.

The enzyme catalyses (2R,3S)-3-isopropylmalate = (2S)-2-isopropylmalate. It functions in the pathway amino-acid biosynthesis; L-leucine biosynthesis; L-leucine from 3-methyl-2-oxobutanoate: step 2/4. Catalyzes the isomerization between 2-isopropylmalate and 3-isopropylmalate, via the formation of 2-isopropylmaleate. The chain is 3-isopropylmalate dehydratase small subunit from Dechloromonas aromatica (strain RCB).